We begin with the raw amino-acid sequence, 116 residues long: Beta-2-microglobulin (116 aa).

A signal peptide spans 1–19 (MRAIITFALFCVLYITVQA). The 88-residue stretch at 24–111 (PKVQVYSHFP…RHMSNTNAYS (88 aa)) folds into the Ig-like C1-type domain. Cys44 and Cys99 are joined by a disulfide.

The protein belongs to the beta-2-microglobulin family. In terms of assembly, heterodimer of an alpha chain and a beta chain. Beta-2-microglobulin is the beta-chain of major histocompatibility complex class I molecules.

Its subcellular location is the secreted. Component of the class I major histocompatibility complex (MHC). Involved in the presentation of peptide antigens to the immune system. The protein is Beta-2-microglobulin (b2m) of Labeobarbus intermedius (Lake tana barbels).